The sequence spans 127 residues: MAKHRLQQVADTMQRVLGDVIQKELKDPRVGFATVTGVEVSADLQHAKVRISVMGSPEEREAAMAALQRARGFLRKRVAEEMSYMRFVPELHLIQDTSLDYTMHMDEVFRAIQHERLVNPPKLDDEQ.

It belongs to the RbfA family. In terms of assembly, monomer. Binds 30S ribosomal subunits, but not 50S ribosomal subunits or 70S ribosomes.

It is found in the cytoplasm. Functionally, one of several proteins that assist in the late maturation steps of the functional core of the 30S ribosomal subunit. Associates with free 30S ribosomal subunits (but not with 30S subunits that are part of 70S ribosomes or polysomes). Required for efficient processing of 16S rRNA. May interact with the 5'-terminal helix region of 16S rRNA. This is Ribosome-binding factor A from Chloroflexus aurantiacus (strain ATCC 29366 / DSM 635 / J-10-fl).